We begin with the raw amino-acid sequence, 338 residues long: P2Y purinoceptor 14 (338 aa).

The Extracellular portion of the chain corresponds to 1-29 (MINSTSTQPPDESCSQNLLITQQIIPVLY). An N-linked (GlcNAc...) asparagine glycan is attached at Asn3. Residues 30–50 (CMVFIAGILLNGVSGWIFFYV) form a helical membrane-spanning segment. The Cytoplasmic portion of the chain corresponds to 51–55 (PSSKS). Residues 56–76 (FIIYLKNIVIADFVMSLTFPF) traverse the membrane as a helical segment. Residues 77 to 96 (KILGDSGLGPWQLNVFVCRV) lie on the Extracellular side of the membrane. Cysteines 94 and 172 form a disulfide. Residues 97–117 (SAVLFYVNMYVSIVFFGLISF) form a helical membrane-spanning segment. Residues 118–139 (DRYYKIVKPLWTSFIQSVSYSK) lie on the Cytoplasmic side of the membrane. Residues 140 to 160 (LLSVIVWMLMLLLAVPNIILT) form a helical membrane-spanning segment. Asn161 carries an N-linked (GlcNAc...) asparagine glycan. Residues 161–188 (NQSVREVTQIKCIELKSELGRKWHKASN) lie on the Extracellular side of the membrane. A helical membrane pass occupies residues 189–209 (YIFVAIFWIVFLLLIVFYTAI). The Cytoplasmic portion of the chain corresponds to 210–234 (TKKIFKSHLKSSRNSTSVKKKSSRN). A helical membrane pass occupies residues 235-255 (IFSIVFVFFVCFVPYHIARIP). The Extracellular segment spans residues 256–278 (YTKSQTEAHYSCQSKEILRYMKE). The helical transmembrane segment at 279–299 (FTLLLSAANVCLDPIIYFFLC) threads the bilayer. The Cytoplasmic segment spans residues 300 to 338 (QPFREILCKKLHIPLKAQNDLDISRIKRGNTTLESTDTL).

This sequence belongs to the G-protein coupled receptor 1 family. In terms of tissue distribution, highest expression in the placenta, adipose tissue, stomach and intestine, intermediate levels in the brain, spleen, lung and heart, lowest levels in the kidney.

Its subcellular location is the cell membrane. Its function is as follows. Receptor for UDP-glucose and other UDP-sugar coupled to G-proteins. Not activated by ATP, ADP, UTP or ATP. The polypeptide is P2Y purinoceptor 14 (P2RY14) (Homo sapiens (Human)).